Reading from the N-terminus, the 516-residue chain is NAD(P)H-quinone oxidoreductase chain 4, chloroplastic (516 aa).

The next 14 helical transmembrane spans lie at 4–24 (FPWLTIIVVFPILTGSLIFLL), 37–57 (LCICILELLLTTYTFCYHFQL), 87–107 (IGPILLTGFITTLATLAAWPV), 111–131 (AQLFHFLMLAMYSGQIGSFSS), 134–154 (LLLFFLMWEFELIPVYLLLSM), 167–187 (FILYTAGGSIFLLIGVLGIGL), 208–228 (ALEVIFYVGFLIAFAVKLPII), 242–262 (HYSTCMLLAGILLKMGAYGLV), 272–292 (AHCLFSPGLIIVGAIQIIYAA), 305–325 (IAYSSISHMGFIIIGIGSLSD), 330–350 (GAILQIISHGFIGAALFFLAG), 386–406 (LALPGLSGFVAELLVFFGIIT), 416–436 (ILIAFLMAIGMILTPIYSLSM), and 462–482 (LFVSISLLLPIIGIGIYPDFV).

The protein belongs to the complex I subunit 4 family.

It is found in the plastid. It localises to the chloroplast thylakoid membrane. The catalysed reaction is a plastoquinone + NADH + (n+1) H(+)(in) = a plastoquinol + NAD(+) + n H(+)(out). The enzyme catalyses a plastoquinone + NADPH + (n+1) H(+)(in) = a plastoquinol + NADP(+) + n H(+)(out). In Oenothera argillicola (Appalachian evening primrose), this protein is NAD(P)H-quinone oxidoreductase chain 4, chloroplastic.